A 352-amino-acid chain; its full sequence is Ribosome biogenesis protein BRX1 homolog (352 aa).

Residues 1–47 (MAATKRKRRGDLEVQAKKPKKNRKDAGQPAKQADVAKEAEEEKDRIP) form a disordered region. Residues 34–46 (DVAKEAEEEKDRI) are compositionally biased toward basic and acidic residues. A Brix domain is found at 59 to 248 (ERILIFSSRG…LIKIFQGSFG (190 aa)). Residue Lys159 forms a Glycyl lysine isopeptide (Lys-Gly) (interchain with G-Cter in SUMO2) linkage. Ser260 is subject to Phosphoserine. Residue Lys275 is modified to N6-acetyllysine. Residues 281–301 (QVKDVQKSRKKEPKTILPHDP) form a disordered region. Residues Lys313 and Lys321 each participate in a glycyl lysine isopeptide (Lys-Gly) (interchain with G-Cter in SUMO2) cross-link.

It belongs to the BRX1 family.

Its subcellular location is the nucleus. It localises to the nucleolus. Required for biogenesis of the 60S ribosomal subunit. The chain is Ribosome biogenesis protein BRX1 homolog (Brix1) from Rattus norvegicus (Rat).